A 51-amino-acid chain; its full sequence is Sperm protamine P1 (51 aa).

2 cysteine pairs are disulfide-bonded: Cys-7–Cys-15 and Cys-40–Cys-48.

Belongs to the protamine P1 family. In terms of assembly, cross-linked by interchain disulfide bonds around the DNA-helix. In terms of tissue distribution, testis.

Its subcellular location is the nucleus. The protein localises to the chromosome. In terms of biological role, protamines substitute for histones in the chromatin of sperm during the haploid phase of spermatogenesis. They compact sperm DNA into a highly condensed, stable and inactive complex. The protein is Sperm protamine P1 (PRM1) of Capra hircus (Goat).